We begin with the raw amino-acid sequence, 113 residues long: Hydrogenase maturation factor HypA (113 aa).

H2 contributes to the Ni(2+) binding site. C73, C76, C89, and C92 together coordinate Zn(2+).

This sequence belongs to the HypA/HybF family.

Functionally, involved in the maturation of [NiFe] hydrogenases. Required for nickel insertion into the metal center of the hydrogenase. This chain is Hydrogenase maturation factor HypA, found in Moorella thermoacetica (strain ATCC 39073 / JCM 9320).